Here is a 680-residue protein sequence, read N- to C-terminus: Zinc finger protein 334 (680 aa).

Residues 10–81 (VSFQDLTVNF…EEFSNQNYPD (72 aa)) form the KRAB domain. 14 C2H2-type zinc fingers span residues 237–259 (NECNECRKTFSKRSTLIVHQRIH), 265–287 (YVCSDCRKTFRVKTSLTRHRRIH), 293–315 (YECSECRKTFIDKSALIVHQKIH), 321–343 (YECNECGKTFFRKSALAEHFRSH), 349–371 (YECKECGNAFSKKSYLVVHQRTH), 377–399 (NECKECGKTFFCQSALTAHQRIH), 405–427 (YECSECEKTFFCQSALNVHRRSH), 433–455 (YECSQCGKFLCTKSALIAHQITH), 461–483 (YECNECGKFFCHKSTLTIHQRTH), 544–566 (YECNECGRTYCRKSALTHHQRTH), 572–594 (YECNECGKTFCQKFSFVEHQRTH), 600–622 (YECNECGKSFCHKSAFRVHRRIH), 628–650 (YECNQCGKTYRRLWTLTEHQKIH), and 656–678 (YECNKCEKTFRHKSNFLLHQKSH).

It belongs to the krueppel C2H2-type zinc-finger protein family.

It is found in the nucleus. Its function is as follows. May be involved in transcriptional regulation. The protein is Zinc finger protein 334 (ZNF334) of Homo sapiens (Human).